The following is a 504-amino-acid chain: UDP-N-acetylmuramoylalanine--D-glutamate ligase (504 aa).

129–135 (GTNGKTT) lines the ATP pocket.

This sequence belongs to the MurCDEF family.

The protein resides in the cytoplasm. The enzyme catalyses UDP-N-acetyl-alpha-D-muramoyl-L-alanine + D-glutamate + ATP = UDP-N-acetyl-alpha-D-muramoyl-L-alanyl-D-glutamate + ADP + phosphate + H(+). Its pathway is cell wall biogenesis; peptidoglycan biosynthesis. Cell wall formation. Catalyzes the addition of glutamate to the nucleotide precursor UDP-N-acetylmuramoyl-L-alanine (UMA). In Burkholderia thailandensis (strain ATCC 700388 / DSM 13276 / CCUG 48851 / CIP 106301 / E264), this protein is UDP-N-acetylmuramoylalanine--D-glutamate ligase.